The following is a 75-amino-acid chain: Small ribosomal subunit protein bS18 (75 aa).

It belongs to the bacterial ribosomal protein bS18 family. Part of the 30S ribosomal subunit. Forms a tight heterodimer with protein bS6.

Its function is as follows. Binds as a heterodimer with protein bS6 to the central domain of the 16S rRNA, where it helps stabilize the platform of the 30S subunit. This Moorella thermoacetica (strain ATCC 39073 / JCM 9320) protein is Small ribosomal subunit protein bS18.